Here is a 473-residue protein sequence, read N- to C-terminus: Bifunctional protein HldE (473 aa).

The ribokinase stretch occupies residues 1–318; that stretch reads MKLTLPRYDQ…RAVQREEGSE (318 aa). Residue 194–197 coordinates ATP; the sequence is NLHE. Asp-263 is a catalytic residue. Positions 343–473 are cytidylyltransferase; it reads FTNGCFDILH…TAIVEKIRNK (131 aa).

The protein in the N-terminal section; belongs to the carbohydrate kinase PfkB family. In the C-terminal section; belongs to the cytidylyltransferase family. Homodimer.

The enzyme catalyses D-glycero-beta-D-manno-heptose 7-phosphate + ATP = D-glycero-beta-D-manno-heptose 1,7-bisphosphate + ADP + H(+). It carries out the reaction D-glycero-beta-D-manno-heptose 1-phosphate + ATP + H(+) = ADP-D-glycero-beta-D-manno-heptose + diphosphate. The protein operates within nucleotide-sugar biosynthesis; ADP-L-glycero-beta-D-manno-heptose biosynthesis; ADP-L-glycero-beta-D-manno-heptose from D-glycero-beta-D-manno-heptose 7-phosphate: step 1/4. It participates in nucleotide-sugar biosynthesis; ADP-L-glycero-beta-D-manno-heptose biosynthesis; ADP-L-glycero-beta-D-manno-heptose from D-glycero-beta-D-manno-heptose 7-phosphate: step 3/4. Functionally, catalyzes the phosphorylation of D-glycero-D-manno-heptose 7-phosphate at the C-1 position to selectively form D-glycero-beta-D-manno-heptose-1,7-bisphosphate. Its function is as follows. Catalyzes the ADP transfer from ATP to D-glycero-beta-D-manno-heptose 1-phosphate, yielding ADP-D-glycero-beta-D-manno-heptose. The chain is Bifunctional protein HldE from Ectopseudomonas mendocina (strain ymp) (Pseudomonas mendocina).